The following is a 202-amino-acid chain: uncharacterized protein (202 aa).

The signal sequence occupies residues 1 to 18 (MKNRLLILSLLVSVPAFA).

To E.coli YebB.

This is an uncharacterized protein from Escherichia coli (strain K12).